A 231-amino-acid chain; its full sequence is Orotate phosphoribosyltransferase (231 aa).

5-phospho-alpha-D-ribose 1-diphosphate is bound by residues Lys27, 79-80 (YK), Arg106, Lys107, Lys110, His112, and 133-141 (DDVMTAGTA). Thr137 and Arg166 together coordinate orotate.

The protein belongs to the purine/pyrimidine phosphoribosyltransferase family. PyrE subfamily. In terms of assembly, homodimer. Mg(2+) serves as cofactor.

It catalyses the reaction orotidine 5'-phosphate + diphosphate = orotate + 5-phospho-alpha-D-ribose 1-diphosphate. It functions in the pathway pyrimidine metabolism; UMP biosynthesis via de novo pathway; UMP from orotate: step 1/2. Its function is as follows. Catalyzes the transfer of a ribosyl phosphate group from 5-phosphoribose 1-diphosphate to orotate, leading to the formation of orotidine monophosphate (OMP). This chain is Orotate phosphoribosyltransferase, found in Bifidobacterium longum (strain DJO10A).